The following is a 1642-amino-acid chain: Cholesterol transporter ABCA5 (1642 aa).

Residues 32–52 (SVQEILFPLFFLFWLILISMM) traverse the membrane as a helical segment. Residue Asn-86 is glycosylated (N-linked (GlcNAc...) asparagine). Transmembrane regions (helical) follow at residues 220 to 240 (VILI…AIHI), 264 to 284 (LSWV…MAVI), 297 to 317 (IVIF…ALML), 328 to 348 (GIVE…IILI), 355 to 375 (LVWL…AQVM), and 396 to 416 (LIIT…LAVY). N-linked (GlcNAc...) asparagine glycosylation is present at Asn-458. Residues 478 to 713 (IRISGIQKTY…WGIGYRLSMY (236 aa)) form the ABC transporter 1 domain. 514–521 (GHSGTGKS) is a binding site for ATP. The next 2 membrane-spanning stretches (helical) occupy residues 866 to 886 (LLLL…HHSF) and 967 to 987 (VFAA…VNII). The N-linked (GlcNAc...) asparagine glycan is linked to Asn-996. Transmembrane regions (helical) follow at residues 1021 to 1041 (LYFQ…YFAM), 1071 to 1091 (VVDI…LLAF), 1102 to 1122 (FLAV…FTYI), 1139 to 1159 (FIYS…FFMG), 1169 to 1189 (AFCI…FIKI), and 1207 to 1227 (LSVA…LLQY). The disordered stretch occupies residues 1249 to 1268 (KSKNRKLPEPPDNEDEDEDV). Acidic residues predominate over residues 1259–1268 (PDNEDEDEDV). Residues 1290-1533 (IMVSNLHKEY…FGKGYFLEIK (244 aa)) enclose the ABC transporter 2 domain. An ATP-binding site is contributed by 1333 to 1340 (GPNGAGKS).

Belongs to the ABC transporter superfamily. ABCA family. Post-translationally, N-glycosylated. Ubiquitously expressed. Highly expressed in testis, skeletal muscle, kidney, liver and placenta. Expressed in both the epithelial and mesenchymal compartments, present within the outer root sheath (ORS) of the hair follicle as well as dermal sheath. Expressed in multiple regions of the brain, including the hippocampus, superior frontal and inferior temporal cortices. Strongly expressed in neurons and moderately in microglia, with only weak expression in astrocytes and oligodendrocytes.

It localises to the golgi apparatus membrane. It is found in the lysosome membrane. The protein resides in the late endosome membrane. The protein localises to the cell membrane. It carries out the reaction cholesterol(in) + ATP + H2O = cholesterol(out) + ADP + phosphate + H(+). Cholesterol efflux transporter in macrophages that is responsible for APOAI/high-density lipoproteins (HDL) formation at the plasma membrane under high cholesterol levels and participates in reverse cholesterol transport. May play a role in the processing of autolysosomes. This Homo sapiens (Human) protein is Cholesterol transporter ABCA5.